The primary structure comprises 945 residues: Netrin receptor UNC5B (945 aa).

The first 26 residues, M1–A26, serve as a signal peptide directing secretion. Residues G27 to Y377 are Extracellular-facing. The Ig-like domain occupies P48–Y145. Cystine bridges form between C69–C130, C81–C128, C174–C225, C258–C295, C262–C299, C273–C285, C314–C348, C318–C353, and C326–C338. In terms of domain architecture, Ig-like C2-type spans R147–I242. N-linked (GlcNAc...) asparagine glycosylation is present at N222. TSP type-1 domains are found at residues N246–P300 and D302–M354. N347 carries N-linked (GlcNAc...) asparagine glycosylation. A helical transmembrane segment spans residues A378–V398. Residues Y399–C945 are Cytoplasmic-facing. Residue C403 is the site of S-palmitoyl cysteine attachment. The 144-residue stretch at S543–S686 folds into the ZU5 domain. The residue at position 581 (Y581) is a Phosphotyrosine. Residues R689–T838 form a UPA domain region. The tract at residues S707–K725 is interaction with DCC. A Death domain is found at K865–G943.

This sequence belongs to the unc-5 family. Interacts with the cytoplasmic part of DCC. Interacts with GNAI2 via its cytoplasmic part. Interacts (via death domain) with DAPK1 (via death domain). Interacts (via extracellular domain) with FLRT3 (via extracellular domain); the interaction is direct. Interacts (via extracellular domain) with FLRT2 and FLRT3 (via extracellular domain), but has higher affinity for FLRT3. Identified in a complex with FLRT3 and ADGRL3; does not interact with ADGRL3 by itself. Phosphorylated on cytoplasmic tyrosine residues. Post-translationally, proteolytically cleaved by caspases during apoptosis. The cleavage does not take place when the receptor is associated with netrin ligand. Its cleavage by caspases is required to induce apoptosis. In terms of processing, palmitoylation is required for pro-apoptotic activity, but not for location at lipid rafts. As to expression, highly expressed in brain. Also expressed at lower level in developing lung, cartilage, kidney and hematopoietic and immune tissues.

The protein localises to the cell membrane. It is found in the membrane raft. Its function is as follows. Receptor for netrin required for axon guidance. Mediates axon repulsion of neuronal growth cones in the developing nervous system upon ligand binding. Axon repulsion in growth cones may be caused by its association with DCC that may trigger signaling for repulsion. Functions as a netrin receptor that negatively regulates vascular branching during angiogenesis. Mediates retraction of tip cell filopodia on endothelial growth cones in response to netrin. It also acts as a dependence receptor required for apoptosis induction when not associated with netrin ligand. Mediates apoptosis by activating DAPK1. In the absence of NTN1, activates DAPK1 by reducing its autoinhibitory phosphorylation at Ser-308 thereby increasing its catalytic activity. The sequence is that of Netrin receptor UNC5B (UNC5B) from Homo sapiens (Human).